Reading from the N-terminus, the 158-residue chain is Placenta growth factor (158 aa).

A signal peptide (or 26) is located at residues 1–23; the sequence is MLAMKLFTCFLQVLAGLAVHSQG. Residues Asn-29 and Asn-30 are each glycosylated (N-linked (GlcNAc...) asparagine). 3 cysteine pairs are disulfide-bonded: Cys-48–Cys-90, Cys-79–Cys-125, and Cys-83–Cys-127. N-linked (GlcNAc...) asparagine glycosylation is present at Asn-97. The segment at 136–158 is disordered; the sequence is AERRKTKGKRKQSKTPQTEEPHL. The segment covering 137–148 has biased composition (basic residues); it reads ERRKTKGKRKQS.

This sequence belongs to the PDGF/VEGF growth factor family. In terms of assembly, antiparallel homodimer; disulfide-linked. Also found as heterodimer with VEGFA/VEGF.

The protein resides in the secreted. In terms of biological role, growth factor active in angiogenesis and endothelial cell growth, stimulating their proliferation and migration. It binds to the receptor FLT1/VEGFR-1. Also promotes cell tumor growth. The chain is Placenta growth factor (Pgf) from Rattus norvegicus (Rat).